The chain runs to 125 residues: Small ribosomal subunit protein uS13 (125 aa).

A disordered region spans residues T90–K125.

The protein belongs to the universal ribosomal protein uS13 family. In terms of assembly, part of the 30S ribosomal subunit. Forms a loose heterodimer with protein S19. Forms two bridges to the 50S subunit in the 70S ribosome.

Functionally, located at the top of the head of the 30S subunit, it contacts several helices of the 16S rRNA. In the 70S ribosome it contacts the 23S rRNA (bridge B1a) and protein L5 of the 50S subunit (bridge B1b), connecting the 2 subunits; these bridges are implicated in subunit movement. Contacts the tRNAs in the A and P-sites. In Gemmatimonas aurantiaca (strain DSM 14586 / JCM 11422 / NBRC 100505 / T-27), this protein is Small ribosomal subunit protein uS13.